Consider the following 245-residue polypeptide: Dehydrogenase/reductase SDR family member 6 (245 aa).

NAD(+) contacts are provided by residues 16–18, D37, and D58; that span reads QGI. R144 contributes to the substrate binding site. Y147 serves as the catalytic Proton acceptor. Residues K151 and 180 to 184 contribute to the NAD(+) site; that span reads VDTPS. Residues R188 and R205 each coordinate substrate.

The protein belongs to the short-chain dehydrogenases/reductases (SDR) family. Homotetramer. In terms of tissue distribution, detected in liver, spleen and macrophages. Widely expressed.

The protein resides in the cytoplasm. It catalyses the reaction cis-4-hydroxy-L-proline + NAD(+) = 4-oxo-L-proline + NADH + H(+). The enzyme catalyses (R)-3-hydroxybutanoate + NAD(+) = acetoacetate + NADH + H(+). Its pathway is amino-acid metabolism. It functions in the pathway siderophore biosynthesis. Functionally, NAD(H)-dependent dehydrogenase/reductase with a preference for cyclic substrates. Catalyzes stereoselective conversion of 4-oxo-L-proline to cis-4-hydroxy-L-proline, likely a detoxification mechanism for ketoprolines. Mediates the formation of 2,5-dihydroxybenzoate (2,5-DHBA), a siderophore that chelates free cytoplasmic iron and associates with LCN2, thereby regulating iron transport and homeostasis while protecting cells against free radical-induced oxidative stress. The iron-siderophore complex is imported into mitochondria, providing an iron source for mitochondrial metabolic processes in particular heme synthesis. May act as a 3-hydroxybutyrate dehydrogenase. (Microbial infection) May play a role in susceptibility to bacterial infection by providing an assimilable source of iron that is exploited by pathogenic bacteria. Host iron-siderophore complexes can be used by bacteria to promote their own growth and pathogenicity. This is Dehydrogenase/reductase SDR family member 6 from Mus musculus (Mouse).